The chain runs to 91 residues: Large ribosomal subunit protein bL31B (91 aa).

The protein belongs to the bacterial ribosomal protein bL31 family. Type B subfamily. As to quaternary structure, part of the 50S ribosomal subunit.

In Neisseria meningitidis serogroup B (strain ATCC BAA-335 / MC58), this protein is Large ribosomal subunit protein bL31B.